The following is a 509-amino-acid chain: Probable malate:quinone oxidoreductase (509 aa).

The tract at residues 490–509 (LGLNEKEPVSGASEKELVYS) is disordered. A compositionally biased stretch (basic and acidic residues) spans 493–509 (NEKEPVSGASEKELVYS).

The protein belongs to the MQO family. Requires FAD as cofactor.

It catalyses the reaction (S)-malate + a quinone = a quinol + oxaloacetate. It participates in carbohydrate metabolism; tricarboxylic acid cycle; oxaloacetate from (S)-malate (quinone route): step 1/1. The polypeptide is Probable malate:quinone oxidoreductase (Geobacillus sp. (strain WCH70)).